We begin with the raw amino-acid sequence, 180 residues long: MAALLMPRRNKGMRTRLGCLSHKSDSCSDFTAILPDKPNRALKRLSTEEATRWAESFDVLLSHKYGVAAFRAFLKTEFSEENLEFWLACEEFKKTRSTAKLVTKAHRIFEEFVDVQAPREVNIDFQTREATRKNMQEPSLTCFDQAQGKVHSLMEKDSYPRFLRSKMYLDLLSQSQRRLS.

Residue Ser-26 is modified to Phosphoserine. Positions 56–171 constitute an RGS domain; that stretch reads SFDVLLSHKY…FLRSKMYLDL (116 aa).

Interacts with GNAO1 and GNAI3.

The protein resides in the cell membrane. It localises to the membrane. The protein localises to the perikaryon. It is found in the cell projection. Its subcellular location is the dendrite. The protein resides in the nucleus. Its function is as follows. Regulates G protein-coupled receptor signaling cascades, including signaling via muscarinic acetylcholine receptor CHRM2 and dopamine receptor DRD2. Inhibits signal transduction by increasing the GTPase activity of G protein alpha subunits, thereby driving them into their inactive GDP-bound form. Modulates the activity of potassium channels that are activated in response to DRD2 and CHRM2 signaling. This chain is Regulator of G-protein signaling 8 (Rgs8), found in Mus musculus (Mouse).